The sequence spans 413 residues: uncharacterized protein (413 aa).

The helical transmembrane segment at 25-47 threads the bilayer; sequence IVNLSALLPLITSTTSTAGSIIT.

It localises to the host membrane. This is an uncharacterized protein from Acidianus sp. F28 (AFV-2).